The following is a 356-amino-acid chain: Arginine kinase (356 aa).

The residue at position 2 (Ala-2) is an N-acetylalanine. The 83-residue stretch at 9–91 (KLEEGFKKLE…FDPIIEDYHK (83 aa)) folds into the Phosphagen kinase N-terminal domain. 64–68 (GVGIY) is an L-arginine binding site. One can recognise a Phosphagen kinase C-terminal domain in the interval 119–356 (FVISTRVRCG…LELIKIEKEM (238 aa)). Residues 122-126 (STRVR) and His-185 each bind ATP. Glu-225 is a binding site for L-arginine. Arg-229 contacts ATP. Cys-271 is a binding site for L-arginine. ATP-binding positions include 280-284 (RASVH) and 309-314 (RGTRGE). Glu-314 is an L-arginine binding site.

It belongs to the ATP:guanido phosphotransferase family.

The catalysed reaction is L-arginine + ATP = N(omega)-phospho-L-arginine + ADP + H(+). The polypeptide is Arginine kinase (Homarus gammarus (European lobster)).